We begin with the raw amino-acid sequence, 185 residues long: Thioredoxin F2, chloroplastic (185 aa).

The region spanning 59 to 184 (RRIGSCVVRC…LLAAIEAARS (126 aa)) is the Thioredoxin domain. Residues Cys109 and Cys112 each act as nucleophile in the active site. The cysteines at positions 109 and 112 are disulfide-linked. Cys136 carries the S-glutathionyl cysteine; transient modification.

It belongs to the thioredoxin family. Plant F-type subfamily. In terms of processing, glutathionylation at Cys-136 decreases its ability to be reduced by ferredoxin-thioredoxin reductase and reduces its efficiency in activating target chloroplastic enzymes.

Its subcellular location is the plastid. The protein resides in the chloroplast stroma. Functionally, probable thiol-disulfide oxidoreductase involved in the redox regulation of enzymes of both reductive pentose phosphate pathway (Calvin-Benson cycle) and oxidative pentose phosphate pathway. The polypeptide is Thioredoxin F2, chloroplastic (Arabidopsis thaliana (Mouse-ear cress)).